Here is a 388-residue protein sequence, read N- to C-terminus: Cell adhesion molecule 4 (388 aa).

Residues 1–20 (MGRARRFQWPLLLLWAAAAG) form the signal peptide. The Ig-like V-type domain maps to 21–119 (PGAGQEVQTE…DTHHQIATLT (99 aa)). Topologically, residues 21-324 (PGAGQEVQTE…VEAQTSVPYA (304 aa)) are extracellular. Residues Asn31 and Asn67 are each glycosylated (N-linked (GlcNAc...) asparagine). 3 disulfide bridges follow: Cys44–Cys104, Cys145–Cys199, and Cys245–Cys291. 2 consecutive Ig-like C2-type domains span residues 124–219 (PENP…YVLD) and 224–307 (PTAR…YVLV). Asn286 carries an N-linked (GlcNAc...) asparagine glycan. Residues 325–345 (IVGGILALLVFLIICVLVGMV) traverse the membrane as a helical segment. The Cytoplasmic portion of the chain corresponds to 346 to 388 (WCSVRQKGSYLTHEASGLDEQGEAREAFLNGSDGHKRKEEFFI). The residue at position 361 (Ser361) is a Phosphoserine.

The protein belongs to the nectin family. As to quaternary structure, monomer and homodimer. N-glycosylated. As to expression, expressed in brain, prostate, brain, kidney and some other organs.

It localises to the membrane. Its function is as follows. Involved in the cell-cell adhesion. Has calcium- and magnesium-independent cell-cell adhesion activity. May have tumor-suppressor activity. The chain is Cell adhesion molecule 4 (CADM4) from Homo sapiens (Human).